The sequence spans 442 residues: MTLASDFGFPSAISSSFTILEERYHNNFPNTLCVSSGQESMNNNPVPCQVFPLVSGGSSGGNLFSSSSGFCNGVYVSSSSQARPSVSTVPRDRITVAHVSGEGQRQECPVETHSLQLINQPQEQKIMTWSSDQIRGFFDFPVPDPQAASSRTMVSSKEVLSKCEWPDWADQLISDDSLEPNWSELLGDPNVLNLYSKIETQSSDIARQEIVFRNQHQVDPSMEPFNAKSPPASSMTSKQRMRWTPELHEAFVEAINQLGGSERATPKAVLKLINSPGLTVYHVKSHLQKYRTARYKPELSKDTEEPLVKNLKTIEDIKSLDLKTSIEITEALRLQMKVQKQLHEQLEIQRSLQLQIEEQGRYLQMMIEKQQKMQENKKDSTSSSSMPEADPSAPSPNLSQPFLHKATNSEPSITQKLQNGSSTMDQSESTSGTSNRKRVRED.

One can recognise an HTH myb-type domain in the interval 235-295 (MTSKQRMRWT…HLQKYRTARY (61 aa)). The H-T-H motif DNA-binding region spans 266–291 (PKAVLKLINSPGLTVYHVKSHLQKYR). A coiled coil region spans residues 329-349 (TEALRLQMKVQKQLHEQLEIQ). The LHEQLE motif lies at 342–347 (LHEQLE). Positions 370–380 (QQKMQENKKDS) are enriched in basic and acidic residues. The segment at 370 to 442 (QQKMQENKKD…TSNRKRVRED (73 aa)) is disordered. Positions 395 to 434 (SPNLSQPFLHKATNSEPSITQKLQNGSSTMDQSESTSGTS) are enriched in polar residues.

Belongs to the MYB-CC family.

The protein localises to the nucleus. The protein is Myb family transcription factor PHL13 of Arabidopsis thaliana (Mouse-ear cress).